The sequence spans 1502 residues: Nucleoporin NUP170 (1502 aa).

Positions 1 to 31 (MFQSFFHNNGPAAAGETFSDSRSYPLTNHQE) are disordered. Positions 18 to 30 (FSDSRSYPLTNHQ) are enriched in polar residues. The segment at 233 to 261 (LISTTMELFMFAISLDKATNELSVFNTHL) is leucine-zipper. Serine 1247 bears the Phosphoserine mark.

The protein belongs to the non-repetitive/WGA-negative nucleoporin family. As to quaternary structure, component of the nuclear pore complex (NPC). NPC constitutes the exclusive means of nucleocytoplasmic transport. NPCs allow the passive diffusion of ions and small molecules and the active, nuclear transport receptor-mediated bidirectional transport of macromolecules such as proteins, RNAs, ribonucleoparticles (RNPs), and ribosomal subunits across the nuclear envelope. Due to its 8-fold rotational symmetry, all subunits are present with 8 copies or multiples thereof. During mitosis NUP53 changes its binding partner within the NPC from NUP170 to NIC96, exposing a high affinity binding site for the karyopherin PSE1, and retaining it in the NPC.

Its subcellular location is the nucleus. It localises to the nuclear pore complex. The protein localises to the nucleus membrane. In terms of biological role, functions as a component of the nuclear pore complex (NPC). NPC components, collectively referred to as nucleoporins (NUPs), can play the role of both NPC structural components and of docking or interaction partners for transiently associated nuclear transport factors. NUP170 probably plays an important role in NPC assembly and organization. In addition it is required for chromosome transmission fidelity. In Saccharomyces cerevisiae (strain ATCC 204508 / S288c) (Baker's yeast), this protein is Nucleoporin NUP170 (NUP170).